The sequence spans 567 residues: Pyruvate decarboxylase (567 aa).

2 residues coordinate pyruvate: Asp28 and His117. Thiamine diphosphate-binding positions include Thr393 and Gly416–Ile418. Asp447 provides a ligand contact to Mg(2+). Residues Gly448–Ser449 and Asn475–Ile480 contribute to the thiamine diphosphate site. Mg(2+)-binding residues include Asn475 and Gly477. Pyruvate is bound at residue Glu481.

This sequence belongs to the TPP enzyme family. In terms of assembly, homotetramer. Mg(2+) is required as a cofactor. The cofactor is thiamine diphosphate.

It is found in the cytoplasm. The catalysed reaction is a 2-oxocarboxylate + H(+) = an aldehyde + CO2. The enzyme catalyses pyruvate + H(+) = acetaldehyde + CO2. This is Pyruvate decarboxylase (PDC11) from Candida albicans (strain SC5314 / ATCC MYA-2876) (Yeast).